A 152-amino-acid polypeptide reads, in one-letter code: Interleukin-3 (152 aa).

Positions 1 to 19 (MSRLPVLLLLQLLVRPGLQ) are cleaved as a signal peptide. Residues Asn-34 and Asn-89 are each glycosylated (N-linked (GlcNAc...) asparagine). Cys-35 and Cys-103 are disulfide-bonded.

Belongs to the IL-3 family. Monomer. Activated T-cells, mast cells, natural killer cells.

It localises to the secreted. Granulocyte/macrophage colony-stimulating factors are cytokines that act in hematopoiesis by controlling the production, differentiation, and function of 2 related white cell populations of the blood, the granulocytes and the monocytes-macrophages. Its function is as follows. This CSF induces granulocytes, macrophages, mast cells, stem cells, erythroid cells, eosinophils and megakaryocytes. The polypeptide is Interleukin-3 (IL3) (Pan troglodytes (Chimpanzee)).